We begin with the raw amino-acid sequence, 461 residues long: A-type ATP synthase subunit B (461 aa).

The protein belongs to the ATPase alpha/beta chains family. Has multiple subunits with at least A(3), B(3), C, D, E, F, H, I and proteolipid K(x).

Its subcellular location is the cell membrane. In terms of biological role, component of the A-type ATP synthase that produces ATP from ADP in the presence of a proton gradient across the membrane. The B chain is a regulatory subunit. This Nitrosopumilus maritimus (strain SCM1) protein is A-type ATP synthase subunit B.